The chain runs to 531 residues: DNA damage-binding protein cmr1 (531 aa).

Disordered regions lie at residues 37–83 (GIFP…RGIA) and 218–264 (DASQ…MHIH). Residues 53-64 (KPKKKPAPKKIK) are compositionally biased toward basic residues. The WD 1 repeat unit spans residues 186 to 227 (VTPERIYTMTFHPSEAKPLIFAGDKMGNLGVLDASQERPVSS). Positions 233–245 (GDEEEQEDDDDPD) are enriched in acidic residues. 6 WD repeats span residues 253–293 (PHTR…SVET), 300–340 (SDDV…RTAV), 345–385 (LSEK…HDDP), 392–431 (LSRL…ASWE), 454–497 (GRWV…LAQL), and 500–531 (DGIT…CLWM).

The protein belongs to the WD repeat DDB2/WDR76 family.

Functionally, DNA-binding protein that binds to both single- and double-stranded DNA. Binds preferentially to UV-damaged DNA. May be involved in DNA-metabolic processes. In Aspergillus clavatus (strain ATCC 1007 / CBS 513.65 / DSM 816 / NCTC 3887 / NRRL 1 / QM 1276 / 107), this protein is DNA damage-binding protein cmr1.